A 156-amino-acid polypeptide reads, in one-letter code: Small ribosomal subunit protein uS7 (156 aa).

Belongs to the universal ribosomal protein uS7 family. Part of the 30S ribosomal subunit. Contacts proteins S9 and S11.

One of the primary rRNA binding proteins, it binds directly to 16S rRNA where it nucleates assembly of the head domain of the 30S subunit. Is located at the subunit interface close to the decoding center, probably blocks exit of the E-site tRNA. This chain is Small ribosomal subunit protein uS7, found in Streptococcus pyogenes serotype M12 (strain MGAS2096).